The following is a 251-amino-acid chain: DNA repair protein RecO (251 aa).

Belongs to the RecO family.

Functionally, involved in DNA repair and RecF pathway recombination. The sequence is that of DNA repair protein RecO from Lactococcus lactis subsp. cremoris (strain MG1363).